The primary structure comprises 83 residues: RNA-binding protein Hfq (83 aa).

Residues 10-69 (DPFLNALRREHVPVSIYLVNGIKLQGQIESFDQYVVLLRNTVTQMVYKHAISTIVPGRAV) enclose the Sm domain.

The protein belongs to the Hfq family. Homohexamer.

Its function is as follows. RNA chaperone that binds small regulatory RNA (sRNAs) and mRNAs to facilitate mRNA translational regulation in response to envelope stress, environmental stress and changes in metabolite concentrations. Also binds with high specificity to tRNAs. The polypeptide is RNA-binding protein Hfq (Acidovorax ebreus (strain TPSY) (Diaphorobacter sp. (strain TPSY))).